The chain runs to 420 residues: Tryptophan synthase beta chain (420 aa).

Residue lysine 112 is modified to N6-(pyridoxal phosphate)lysine.

It belongs to the TrpB family. In terms of assembly, tetramer of two alpha and two beta chains. Pyridoxal 5'-phosphate is required as a cofactor.

It carries out the reaction (1S,2R)-1-C-(indol-3-yl)glycerol 3-phosphate + L-serine = D-glyceraldehyde 3-phosphate + L-tryptophan + H2O. The protein operates within amino-acid biosynthesis; L-tryptophan biosynthesis; L-tryptophan from chorismate: step 5/5. The beta subunit is responsible for the synthesis of L-tryptophan from indole and L-serine. This chain is Tryptophan synthase beta chain, found in Thermosipho africanus (strain TCF52B).